The following is a 32-amino-acid chain: Photosystem I reaction center subunit XII (32 aa).

A helical transmembrane segment spans residues Val10–Gly27.

Belongs to the PsaM family.

It is found in the plastid. The protein resides in the chloroplast thylakoid membrane. This Zygnema circumcarinatum (Green alga) protein is Photosystem I reaction center subunit XII.